The sequence spans 308 residues: Peroxisomal targeting signal 2 receptor (308 aa).

WD repeat units follow at residues 57–88 (DVED…RLFD), 101–132 (EHKA…KLWL), 145–176 (GSNS…KFWD), 187–218 (EIPN…YCYD), 231–262 (GHQL…RIFD), and 274–306 (LHSE…YIWN).

The protein belongs to the WD repeat peroxin-7 family. Interacts with PEX21.

It localises to the cytoplasm. The protein resides in the cytosol. The protein localises to the peroxisome matrix. Receptor required for the peroxisomal import of proteins containing a C-terminal PTS2-type peroxisomal targeting signal, such as 3-oxoacyl-CoA thiolase. Specifically binds to cargo proteins containing a PTS2 peroxisomal targeting signal in the cytosol. Cargo protein-binding triggers interaction with PEX21 and formation of a ternary complex composed of PEX21 and PEX7 along with PTS2-containing cargo proteins, which is tranlocated into peroxisomes by passing through the PEX13-PEX14 docking complex. The polypeptide is Peroxisomal targeting signal 2 receptor (pex7) (Schizosaccharomyces pombe (strain 972 / ATCC 24843) (Fission yeast)).